The following is a 519-amino-acid chain: Tetratricopeptide repeat protein 31 (519 aa).

A coiled-coil region spans residues 147–197 (QKLLVTEEEANRLAEELVAEEERMKQKAEKKRLKKKRQKERKRQERLEQYC). The segment covering 175-187 (EKKRLKKKRQKER) has biased composition (basic residues). Disordered regions lie at residues 175 to 230 (EKKR…EEDS) and 253 to 294 (RREK…VQAS). The residue at position 278 (S278) is a Phosphoserine. TPR repeat units lie at residues 305 to 338 (SQEL…NPQD), 339 to 372 (HRLF…RPGW), and 373 to 406 (PRGL…GSQP). Positions 474–506 (PSCHRSHPNQPLSQTQSRRPHPLKPQDPSKGWD) are disordered. Residues 481–490 (PNQPLSQTQS) are compositionally biased toward polar residues.

This is Tetratricopeptide repeat protein 31 (TTC31) from Homo sapiens (Human).